Here is a 262-residue protein sequence, read N- to C-terminus: Sulfur carrier protein FdhD (262 aa).

C107 functions as the Cysteine persulfide intermediate in the catalytic mechanism.

This sequence belongs to the FdhD family.

It localises to the cytoplasm. Functionally, required for formate dehydrogenase (FDH) activity. Acts as a sulfur carrier protein that transfers sulfur from IscS to the molybdenum cofactor prior to its insertion into FDH. The sequence is that of Sulfur carrier protein FdhD from Bacillus subtilis (strain 168).